The primary structure comprises 239 residues: Pyridoxine 5'-phosphate synthase (239 aa).

Position 7 (Asn7) interacts with 3-amino-2-oxopropyl phosphate. 9 to 10 (DH) contributes to the 1-deoxy-D-xylulose 5-phosphate binding site. 3-amino-2-oxopropyl phosphate is bound at residue Arg18. His43 functions as the Proton acceptor in the catalytic mechanism. Arg45 and His50 together coordinate 1-deoxy-D-xylulose 5-phosphate. Catalysis depends on Glu70, which acts as the Proton acceptor. A 1-deoxy-D-xylulose 5-phosphate-binding site is contributed by Thr100. His191 functions as the Proton donor in the catalytic mechanism. Residues Gly192 and 213 to 214 (GH) each bind 3-amino-2-oxopropyl phosphate.

This sequence belongs to the PNP synthase family. In terms of assembly, homooctamer; tetramer of dimers.

It is found in the cytoplasm. The catalysed reaction is 3-amino-2-oxopropyl phosphate + 1-deoxy-D-xylulose 5-phosphate = pyridoxine 5'-phosphate + phosphate + 2 H2O + H(+). It participates in cofactor biosynthesis; pyridoxine 5'-phosphate biosynthesis; pyridoxine 5'-phosphate from D-erythrose 4-phosphate: step 5/5. Catalyzes the complicated ring closure reaction between the two acyclic compounds 1-deoxy-D-xylulose-5-phosphate (DXP) and 3-amino-2-oxopropyl phosphate (1-amino-acetone-3-phosphate or AAP) to form pyridoxine 5'-phosphate (PNP) and inorganic phosphate. This Geotalea uraniireducens (strain Rf4) (Geobacter uraniireducens) protein is Pyridoxine 5'-phosphate synthase.